The sequence spans 733 residues: 1,4-alpha-glucan branching enzyme GlgB (733 aa).

Catalysis depends on Asp-412, which acts as the Nucleophile. The active-site Proton donor is Glu-467.

Belongs to the glycosyl hydrolase 13 family. GlgB subfamily. As to quaternary structure, monomer.

The catalysed reaction is Transfers a segment of a (1-&gt;4)-alpha-D-glucan chain to a primary hydroxy group in a similar glucan chain.. It functions in the pathway glycan biosynthesis; glycogen biosynthesis. Its function is as follows. Catalyzes the formation of the alpha-1,6-glucosidic linkages in glycogen by scission of a 1,4-alpha-linked oligosaccharide from growing alpha-1,4-glucan chains and the subsequent attachment of the oligosaccharide to the alpha-1,6 position. This Burkholderia vietnamiensis (strain G4 / LMG 22486) (Burkholderia cepacia (strain R1808)) protein is 1,4-alpha-glucan branching enzyme GlgB.